Consider the following 709-residue polypeptide: Elongation factor G (709 aa).

The region spanning 6-295 (KFLRNIGIMA…AVCTYLPSPL (290 aa)) is the tr-type G domain. Residues 15–22 (AHIDAGKT), 92–96 (DTPGH), and 146–149 (NKMD) contribute to the GTP site.

It belongs to the TRAFAC class translation factor GTPase superfamily. Classic translation factor GTPase family. EF-G/EF-2 subfamily.

The protein resides in the cytoplasm. Its function is as follows. Catalyzes the GTP-dependent ribosomal translocation step during translation elongation. During this step, the ribosome changes from the pre-translocational (PRE) to the post-translocational (POST) state as the newly formed A-site-bound peptidyl-tRNA and P-site-bound deacylated tRNA move to the P and E sites, respectively. Catalyzes the coordinated movement of the two tRNA molecules, the mRNA and conformational changes in the ribosome. This is Elongation factor G from Amoebophilus asiaticus (strain 5a2).